The following is a 191-amino-acid chain: Adenine phosphoribosyltransferase 5 (191 aa).

Belongs to the purine/pyrimidine phosphoribosyltransferase family. As to quaternary structure, homodimer.

It is found in the cytoplasm. The catalysed reaction is AMP + diphosphate = 5-phospho-alpha-D-ribose 1-diphosphate + adenine. Its pathway is purine metabolism; AMP biosynthesis via salvage pathway; AMP from adenine: step 1/1. Catalyzes a salvage reaction resulting in the formation of AMP, that is energically less costly than de novo synthesis. May contribute to the recycling of adenine into adenylate nucleotides and the inactivation of cytokinins by phosphoribosylation. Possesses low activity toward adenine, but can efficiently convert cytokinins from free bases (active form) to the corresponding nucleotides (inactive form). This is Adenine phosphoribosyltransferase 5 (APT5) from Arabidopsis thaliana (Mouse-ear cress).